The sequence spans 113 residues: MQSLLVFCLATIILSNFTEASADLETASQSLKHPRNLGWKAPEGHREKRYGGWGGGYPYGGYGGYGGGYGGGYGGGYGGGYGGRYGGNYGSSSWGSYSSYSSGGYSSYNSGFW.

The first 22 residues, M1–A22, serve as a signal peptide directing secretion.

This chain is Protein suex-1, found in Caenorhabditis elegans.